The chain runs to 483 residues: Glutamyl-tRNA(Gln) amidotransferase subunit A (483 aa).

Residues lysine 76 and serine 151 each act as charge relay system in the active site. Serine 175 functions as the Acyl-ester intermediate in the catalytic mechanism.

It belongs to the amidase family. GatA subfamily. Heterotrimer of A, B and C subunits.

It catalyses the reaction L-glutamyl-tRNA(Gln) + L-glutamine + ATP + H2O = L-glutaminyl-tRNA(Gln) + L-glutamate + ADP + phosphate + H(+). In terms of biological role, allows the formation of correctly charged Gln-tRNA(Gln) through the transamidation of misacylated Glu-tRNA(Gln) in organisms which lack glutaminyl-tRNA synthetase. The reaction takes place in the presence of glutamine and ATP through an activated gamma-phospho-Glu-tRNA(Gln). The polypeptide is Glutamyl-tRNA(Gln) amidotransferase subunit A (Coxiella burnetii (strain CbuK_Q154) (Coxiella burnetii (strain Q154))).